The primary structure comprises 368 residues: Ribosomal RNA large subunit methyltransferase M (368 aa).

Residues Ser-189, 222–225 (CPGG), Asp-241, Asp-261, and Asp-278 each bind S-adenosyl-L-methionine. Lys-307 (proton acceptor) is an active-site residue.

The protein belongs to the class I-like SAM-binding methyltransferase superfamily. RNA methyltransferase RlmE family. RlmM subfamily. As to quaternary structure, monomer.

The protein resides in the cytoplasm. The catalysed reaction is cytidine(2498) in 23S rRNA + S-adenosyl-L-methionine = 2'-O-methylcytidine(2498) in 23S rRNA + S-adenosyl-L-homocysteine + H(+). In terms of biological role, catalyzes the 2'-O-methylation at nucleotide C2498 in 23S rRNA. The protein is Ribosomal RNA large subunit methyltransferase M of Yersinia enterocolitica serotype O:8 / biotype 1B (strain NCTC 13174 / 8081).